We begin with the raw amino-acid sequence, 191 residues long: A-type ATP synthase subunit E 1 (191 aa).

The protein belongs to the V-ATPase E subunit family. Has multiple subunits with at least A(3), B(3), C, D, E, F, H, I and proteolipid K(x).

It localises to the cell membrane. Its function is as follows. Component of the A-type ATP synthase that produces ATP from ADP in the presence of a proton gradient across the membrane. The chain is A-type ATP synthase subunit E 1 from Methanospirillum hungatei JF-1 (strain ATCC 27890 / DSM 864 / NBRC 100397 / JF-1).